Reading from the N-terminus, the 393-residue chain is Serine/threonine-protein kinase US3 homolog (393 aa).

Positions 93–378 (FVILKTFTPG…AEVLLNHSVF (286 aa)) constitute a Protein kinase domain. Residues 99–107 (FTPGAEGFA) and Lys122 each bind ATP. The Proton acceptor role is filled by Asp206.

This sequence belongs to the protein kinase superfamily. Ser/Thr protein kinase family. Phosphorylated by ORF47; this phosphorylation regulates subsequent phosphorylation of proteins 24 and 27 by ORF66. Autophosphorylated.

Its subcellular location is the host cytoplasm. It localises to the host nucleus. The catalysed reaction is L-seryl-[protein] + ATP = O-phospho-L-seryl-[protein] + ADP + H(+). It carries out the reaction L-threonyl-[protein] + ATP = O-phospho-L-threonyl-[protein] + ADP + H(+). Multifunctional serine/threonine kinase that plays a role in several processes including egress of virus particles from the nucleus, modulation of the actin cytoskeleton and inhibition of apoptosis. Phosphorylates proteins 24 and 27, two critical regulators of capsid budding from nucleus to endoplasmic reticulum, thereby facilitating virion egress. Modulates and redistributes host components of the nuclear envelope, including LMNA, emerin/EMD and the nuclear matrix protein MATR3. Phosphorylates envelope glycoprotein B (gB), probably to direct it to the cell surface. Promotes virus intracellular spread by restructuring host cell cytoskeleton. Blocks host apoptosis to extend cell survival and allow efficient viral replication. Promotes viral gene expression by phosphorylating host HDAC2 to reduce viral genome silencing. Down-regulates class I major histocompatibility complex (MHC-I) surface expression. Additionally, phosphorylates IE62 and targets it to the cytoplasm. The nuclear exclusion of IE62 enables the packaging of abundant levels of IE62 into virions. This is Serine/threonine-protein kinase US3 homolog (66) from Varicella-zoster virus (strain Dumas) (HHV-3).